Here is a 387-residue protein sequence, read N- to C-terminus: 3-ketoacyl-CoA thiolase (387 aa).

Cysteine 91 serves as the catalytic Acyl-thioester intermediate. Active-site proton acceptor residues include histidine 343 and cysteine 373.

It belongs to the thiolase-like superfamily. Thiolase family. As to quaternary structure, heterotetramer of two alpha chains (FadB) and two beta chains (FadA).

The protein resides in the cytoplasm. The catalysed reaction is an acyl-CoA + acetyl-CoA = a 3-oxoacyl-CoA + CoA. Its pathway is lipid metabolism; fatty acid beta-oxidation. In terms of biological role, catalyzes the final step of fatty acid oxidation in which acetyl-CoA is released and the CoA ester of a fatty acid two carbons shorter is formed. The polypeptide is 3-ketoacyl-CoA thiolase (Vibrio vulnificus (strain CMCP6)).